The sequence spans 410 residues: PHAF1 protein At3g51130 (410 aa).

This sequence belongs to the PHAF1 family.

This is PHAF1 protein At3g51130 from Arabidopsis thaliana (Mouse-ear cress).